The chain runs to 768 residues: DNA ligase (768 aa).

NAD(+) contacts are provided by residues 61 to 65 (DAEFD), 110 to 111 (SL), and glutamate 146. The N6-AMP-lysine intermediate role is filled by lysine 148. NAD(+) is bound by residues arginine 169, glutamate 206, lysine 322, and lysine 346. Residues cysteine 443, cysteine 446, cysteine 462, and cysteine 468 each coordinate Zn(2+). Positions 661–750 (SVPRTLEGLT…PAQTGTEAEA (90 aa)) constitute a BRCT domain. Residues 739–768 (NGPAQTGTEAEAATDEATVVDETAAEAATE) are disordered. Positions 746–768 (TEAEAATDEATVVDETAAEAATE) are enriched in low complexity.

The protein belongs to the NAD-dependent DNA ligase family. LigA subfamily. Requires Mg(2+) as cofactor. Mn(2+) serves as cofactor.

It catalyses the reaction NAD(+) + (deoxyribonucleotide)n-3'-hydroxyl + 5'-phospho-(deoxyribonucleotide)m = (deoxyribonucleotide)n+m + AMP + beta-nicotinamide D-nucleotide.. Functionally, DNA ligase that catalyzes the formation of phosphodiester linkages between 5'-phosphoryl and 3'-hydroxyl groups in double-stranded DNA using NAD as a coenzyme and as the energy source for the reaction. It is essential for DNA replication and repair of damaged DNA. This is DNA ligase from Paenarthrobacter aurescens (strain TC1).